A 218-amino-acid chain; its full sequence is Glutathione S-transferase Mu 4 (218 aa).

The GST N-terminal domain occupies 2 to 88 (SMTLGYWDIR…YIARKHNLCG (87 aa)). Residues 7–8 (YW), 46–50 (WLNEK), 59–60 (NL), and 72–73 (QS) each bind glutathione. Residues 90–208 (TEEEKIRVDI…KSSRFLPKPL (119 aa)) enclose the GST C-terminal domain. Tyrosine 116 lines the substrate pocket.

Belongs to the GST superfamily. Mu family. In terms of assembly, homodimer. In terms of tissue distribution, expressed in a wide variety of tissues.

The protein localises to the cytoplasm. It catalyses the reaction RX + glutathione = an S-substituted glutathione + a halide anion + H(+). It carries out the reaction 1-chloro-2,4-dinitrobenzene + glutathione = 2,4-dinitrophenyl-S-glutathione + chloride + H(+). The enzyme catalyses (13S,14S)-epoxy-(4Z,7Z,9E,11E,16Z,19Z)-docosahexaenoate + glutathione = (13R)-S-glutathionyl-(14S)-hydroxy-(4Z,7Z,9E,11E,16Z,19Z)-docosahexaenoate. The catalysed reaction is leukotriene C4 = leukotriene A4 + glutathione. Functionally, conjugation of reduced glutathione to a wide number of exogenous and endogenous hydrophobic electrophiles. Catalyzes the conjugation of leukotriene A4 with reduced glutathione (GSH) to form leukotriene C4. Can also catalyze the transfer of a glutathionyl group from glutathione (GSH) to 13(S),14(S)-epoxy-docosahexaenoic acid to form maresin conjugate in tissue regeneration 1 (MCTR1), a bioactive lipid mediator that possess potent anti-inflammatory and proresolving actions. In Homo sapiens (Human), this protein is Glutathione S-transferase Mu 4 (GSTM4).